The following is a 349-amino-acid chain: AA9 family lytic polysaccharide monooxygenase C (349 aa).

The signal sequence occupies residues 1–19 (MKSTFGLLALAAAAKLVSA). Cu(2+)-binding residues include histidine 20 and histidine 102. A disulfide bridge connects residues cysteine 62 and cysteine 183. Histidine 169 lines the O2 pocket. Tyrosine 180 provides a ligand contact to Cu(2+). Positions 233 to 304 (DGSSSGSSGS…SGSNSGSDSC (72 aa)) are disordered. Low complexity-rich tracts occupy residues 234–262 (GSSS…AAPT) and 269–304 (TSAT…SDSC). In terms of domain architecture, CBM1 spans 311 to 347 (GSVKIYGQCGGQNYSGPTSCEAGLICKEWNPYYHQCV). Disulfide bonds link cysteine 319-cysteine 336 and cysteine 330-cysteine 346. Asparagine 323 is a glycosylation site (N-linked (GlcNAc...) asparagine).

The protein belongs to the polysaccharide monooxygenase AA9 family. The cofactor is Cu(2+).

The protein localises to the secreted. The enzyme catalyses [(1-&gt;4)-beta-D-glucosyl]n+m + reduced acceptor + O2 = 4-dehydro-beta-D-glucosyl-[(1-&gt;4)-beta-D-glucosyl]n-1 + [(1-&gt;4)-beta-D-glucosyl]m + acceptor + H2O.. Functionally, lytic polysaccharide monooxygenase (LPMO) that depolymerizes crystalline and amorphous polysaccharides via the oxidation of scissile alpha- or beta-(1-4)-glycosidic bonds, yielding C4 oxidation products. Catalysis by LPMOs requires the reduction of the active-site copper from Cu(II) to Cu(I) by a reducing agent and H(2)O(2) or O(2) as a cosubstrate. Active on cellulose and cello-oligosaccharides, as well as plant cell wall-derived hemicellulosic polysaccharides. Also active on cello-oligosaccharides such as cellohexaose, cellopentaose or cellotetraose. This Aspergillus fumigatus (strain ATCC MYA-4609 / CBS 101355 / FGSC A1100 / Af293) (Neosartorya fumigata) protein is AA9 family lytic polysaccharide monooxygenase C.